The chain runs to 448 residues: Phosphoglucosamine mutase (448 aa).

Catalysis depends on S102, which acts as the Phosphoserine intermediate. 4 residues coordinate Mg(2+): S102, D242, D244, and D246. S102 carries the phosphoserine modification.

The protein belongs to the phosphohexose mutase family. Mg(2+) serves as cofactor. Post-translationally, activated by phosphorylation.

The catalysed reaction is alpha-D-glucosamine 1-phosphate = D-glucosamine 6-phosphate. Functionally, catalyzes the conversion of glucosamine-6-phosphate to glucosamine-1-phosphate. This chain is Phosphoglucosamine mutase, found in Brevibacillus brevis (strain 47 / JCM 6285 / NBRC 100599).